The chain runs to 1316 residues: DNA-directed RNA polymerase subunit beta' (1316 aa).

Zn(2+)-binding residues include Cys-60, Cys-62, Cys-75, and Cys-78. Asp-535, Asp-537, and Asp-539 together coordinate Mg(2+). Positions 891, 968, 975, and 978 each coordinate Zn(2+).

This sequence belongs to the RNA polymerase beta' chain family. As to quaternary structure, the RNAP catalytic core consists of 2 alpha, 1 beta, 1 beta' and 1 omega subunit. When a sigma factor is associated with the core the holoenzyme is formed, which can initiate transcription. Requires Mg(2+) as cofactor. The cofactor is Zn(2+).

The enzyme catalyses RNA(n) + a ribonucleoside 5'-triphosphate = RNA(n+1) + diphosphate. Functionally, DNA-dependent RNA polymerase catalyzes the transcription of DNA into RNA using the four ribonucleoside triphosphates as substrates. The sequence is that of DNA-directed RNA polymerase subunit beta' from Mycobacterium tuberculosis (strain CDC 1551 / Oshkosh).